Consider the following 124-residue polypeptide: Small ribosomal subunit protein uS12 (124 aa).

Residues 105–124 are disordered; it reads QGVKNRKQARSRYGAKKEKG. The span at 108–118 shows a compositional bias: basic residues; the sequence is KNRKQARSRYG.

It belongs to the universal ribosomal protein uS12 family. Part of the 30S ribosomal subunit. Contacts proteins S8 and S17. May interact with IF1 in the 30S initiation complex.

Its function is as follows. With S4 and S5 plays an important role in translational accuracy. Functionally, interacts with and stabilizes bases of the 16S rRNA that are involved in tRNA selection in the A site and with the mRNA backbone. Located at the interface of the 30S and 50S subunits, it traverses the body of the 30S subunit contacting proteins on the other side and probably holding the rRNA structure together. The combined cluster of proteins S8, S12 and S17 appears to hold together the shoulder and platform of the 30S subunit. In Mycobacterium bovis (strain ATCC BAA-935 / AF2122/97), this protein is Small ribosomal subunit protein uS12 (rpsL).